Reading from the N-terminus, the 173-residue chain is Atrial gland and califin peptides (173 aa).

A signal peptide spans 1 to 21 (MKANTMFIILCLSLSTLCVSS). The propeptide occupies 22–34 (QSTSVHGKIFVPN). I69 bears the Isoleucine amide mark. The propeptide occupies 73–114 (AAGEMEQSEGQNPETKSHSWRKRSVLTPSLSSLGESLESGIS). The segment at 75-94 (GEMEQSEGQNPETKSHSWRK) is disordered. A disulfide bridge links C141 with C172. At L152 the chain carries Leucine amide.

Belongs to the molluscan ELH family. Califin A consists of a 36-residue large subunit bound by a single disulfide bond to a 18-residue small subunit.

Its subcellular location is the secreted. The atrial gland peptide A and peptide B precursors are the source of the 2 peptides that, upon release from this reproductive system gland, initiate the egg-laying process by exciting the bag cell neurons. These neurons, clustered in neural connectives near the abdominal ganglion, in turn release other peptides that act directly on the ganglion and also, via the circulating hemolymph, on many other organs to control the physiological processes of egg-laying. One of these other peptides is the egg-laying hormone. Its function is as follows. Injected in sexually mature animals califin A excites LB and LC cells of the abdominal ganglion and causes egg-laying. This Aplysia californica (California sea hare) protein is Atrial gland and califin peptides.